Consider the following 376-residue polypeptide: ATP phosphoribosyltransferase regulatory subunit (376 aa).

The protein belongs to the class-II aminoacyl-tRNA synthetase family. HisZ subfamily. In terms of assembly, heteromultimer composed of HisG and HisZ subunits.

It is found in the cytoplasm. The protein operates within amino-acid biosynthesis; L-histidine biosynthesis; L-histidine from 5-phospho-alpha-D-ribose 1-diphosphate: step 1/9. In terms of biological role, required for the first step of histidine biosynthesis. May allow the feedback regulation of ATP phosphoribosyltransferase activity by histidine. This Brucella canis (strain ATCC 23365 / NCTC 10854 / RM-666) protein is ATP phosphoribosyltransferase regulatory subunit.